The sequence spans 86 residues: Small ribosomal subunit protein bS20 (86 aa).

Basic residues predominate over residues 1–27 (MANSKSAKKRATQAERRRQHNASRRSM). The interval 1 to 28 (MANSKSAKKRATQAERRRQHNASRRSMM) is disordered.

Belongs to the bacterial ribosomal protein bS20 family.

In terms of biological role, binds directly to 16S ribosomal RNA. This Aliivibrio salmonicida (strain LFI1238) (Vibrio salmonicida (strain LFI1238)) protein is Small ribosomal subunit protein bS20.